A 326-amino-acid chain; its full sequence is Phospho-N-acetylmuramoyl-pentapeptide-transferase (326 aa).

Transmembrane regions (helical) follow at residues 2–22 (ILATKVFFTSFVFGFILFPYF), 51–71 (VPPMGGIIILISSLLPILLWA), 73–93 (LTPEILLLILITLFFALLGFI), 113–133 (ILIQFIVALVGVFILKLYSAE), 143–163 (GVIIDFGYLYVPFAAFVIVGS), 175–195 (GLAATQVITSFAFLGLIAYIT), 199–219 (MNITLFCIAFIGAILSFLWFN), 225–245 (IFMGDVGSLSVGAALGLTSVL), 250–270 (MLFAIIGIIFVIETLSVIIQI), and 305–325 (VIVMKFWIISIICSVFTITFL).

It belongs to the glycosyltransferase 4 family. MraY subfamily. Mg(2+) is required as a cofactor.

Its subcellular location is the cell membrane. It carries out the reaction UDP-N-acetyl-alpha-D-muramoyl-L-alanyl-gamma-D-glutamyl-meso-2,6-diaminopimeloyl-D-alanyl-D-alanine + di-trans,octa-cis-undecaprenyl phosphate = di-trans,octa-cis-undecaprenyl diphospho-N-acetyl-alpha-D-muramoyl-L-alanyl-D-glutamyl-meso-2,6-diaminopimeloyl-D-alanyl-D-alanine + UMP. The protein operates within cell wall biogenesis; peptidoglycan biosynthesis. In terms of biological role, catalyzes the initial step of the lipid cycle reactions in the biosynthesis of the cell wall peptidoglycan: transfers peptidoglycan precursor phospho-MurNAc-pentapeptide from UDP-MurNAc-pentapeptide onto the lipid carrier undecaprenyl phosphate, yielding undecaprenyl-pyrophosphoryl-MurNAc-pentapeptide, known as lipid I. This chain is Phospho-N-acetylmuramoyl-pentapeptide-transferase, found in Wolbachia pipientis wMel.